Reading from the N-terminus, the 243-residue chain is Aldehyde decarbonylase (243 aa).

Glu45, Glu73, His76, Glu128, and His160 together coordinate Fe cation.

Belongs to the aldehyde decarbonylase family. Binds 2 metal cations per subunit. The catalytic dinuclear metal-binding site could be either a di-iron or a manganese-iron cofactor. is required as a cofactor.

The catalysed reaction is a long-chain fatty aldehyde + 2 NADPH + O2 + H(+) = a long-chain alkane + formate + 2 NADP(+) + H2O. Catalyzes the decarbonylation of fatty aldehydes to alkanes. Requires the presence of ferredoxin, ferredoxin reductase and NADPH for in vitro decarbonylase activity. Involved in the biosynthesis of alkanes, mainly heptadecane and pentadecane. The chain is Aldehyde decarbonylase from Prochlorococcus marinus (strain MIT 9313).